Consider the following 414-residue polypeptide: Argininosuccinate synthase (414 aa).

12–20 provides a ligand contact to ATP; it reads AYSGGLDTS. Tyr90 and Ser95 together coordinate L-citrulline. Residue Gly120 participates in ATP binding. L-aspartate is bound by residues Thr122, Asn126, and Asp127. L-citrulline is bound at residue Asn126. 5 residues coordinate L-citrulline: Arg130, Ser179, Ser188, Glu264, and Tyr276.

This sequence belongs to the argininosuccinate synthase family. Type 1 subfamily. In terms of assembly, homotetramer.

The protein localises to the cytoplasm. It carries out the reaction L-citrulline + L-aspartate + ATP = 2-(N(omega)-L-arginino)succinate + AMP + diphosphate + H(+). The protein operates within amino-acid biosynthesis; L-arginine biosynthesis; L-arginine from L-ornithine and carbamoyl phosphate: step 2/3. This is Argininosuccinate synthase from Alkaliphilus metalliredigens (strain QYMF).